The following is a 129-amino-acid chain: Large ribosomal subunit protein uL22 (129 aa).

The protein belongs to the universal ribosomal protein uL22 family. Part of the 50S ribosomal subunit.

Its function is as follows. This protein binds specifically to 23S rRNA; its binding is stimulated by other ribosomal proteins, e.g. L4, L17, and L20. It is important during the early stages of 50S assembly. It makes multiple contacts with different domains of the 23S rRNA in the assembled 50S subunit and ribosome. Functionally, the globular domain of the protein is located near the polypeptide exit tunnel on the outside of the subunit, while an extended beta-hairpin is found that lines the wall of the exit tunnel in the center of the 70S ribosome. The chain is Large ribosomal subunit protein uL22 from Agrobacterium fabrum (strain C58 / ATCC 33970) (Agrobacterium tumefaciens (strain C58)).